A 238-amino-acid chain; its full sequence is MSEQDFREIARNGLWRNNPGLVQLLGLCPLLGTSNSTVNALGLGLATMLVLACSNAAVSLVRGAVSEAIRLPAFVMIIAALTTCIELLMQAWTYELYQVLGIFIPLITTNCVILGRAEAFAAKNGVLRASFDGLLMGLGFALVLLVLGGLRELLGQGTLLADMHLLFGPAAADWKIQPFPQYQGFLLAILPPGAFIMLGLLIALKNRIDESLAERAKVQAGDVPATQRQRVRVTGVIE.

5 helical membrane-spanning segments follow: residues Leu-41 to Val-61, Leu-71 to Ala-91, Glu-95 to Gly-115, Ser-130 to Leu-150, and Gly-184 to Leu-204.

The protein belongs to the NqrDE/RnfAE family. The complex is composed of six subunits: RnfA, RnfB, RnfC, RnfD, RnfE and RnfG.

The protein localises to the cell inner membrane. Functionally, part of a membrane-bound complex that couples electron transfer with translocation of ions across the membrane. The sequence is that of Ion-translocating oxidoreductase complex subunit E from Pseudomonas aeruginosa (strain UCBPP-PA14).